Consider the following 235-residue polypeptide: Modulator of macroautophagy TMEM150B (235 aa).

Residues 1 to 8 (MWGYLSLL) are Cytoplasmic-facing. Residues 9–29 (PMCLAFWAIAGIWTVFSLAVV) traverse the membrane as a helical segment. Residues 30-51 (NKAVNLTDGFPYISVCGNVPPQ) lie on the Extracellular side of the membrane. N-linked (GlcNAc...) asparagine glycosylation is present at N34. A helical membrane pass occupies residues 52 to 72 (SCIFSQVLNIGAASAAWICIL). Residues 73–88 (RYYQLRDWGVRKWHNQ) lie on the Cytoplasmic side of the membrane. Residues 89 to 109 (VILWTGLLCALGTSIVGNFQE) form a helical membrane-spanning segment. The Extracellular portion of the chain corresponds to 110–116 (KNQRATH). Residues 117-137 (LTGAFLAFFVGIVYFWLQLFL) traverse the membrane as a helical segment. Over 138 to 156 (SWRMKNLPQPGAPWIGPLR) the chain is Cytoplasmic. A helical membrane pass occupies residues 157–177 (LVLCSACFILEVAMVVLHSWS). At 178–180 (MRS) the chain is on the extracellular side. Residues 181 to 201 (VSAICEWVAAMLLFILFGLLA) traverse the membrane as a helical segment. At 202 to 235 (VDFSRLDSCTLCLQPGSGSLRPPPDSPTSLHVQL) the chain is on the cytoplasmic side.

This sequence belongs to the DRAM/TMEM150 family.

It localises to the cell membrane. Its subcellular location is the endosome membrane. The protein resides in the cytoplasmic vesicle. It is found in the autophagosome membrane. Its function is as follows. Modulator of macroautophagy that causes accumulation of autophagosomes under basal conditions and enhances autophagic flux. Represses cell death and promotes long-term clonogenic survival of cells grown in the absence of glucose in a macroautophagy-independent manner. May have some role in extracellular matrix engulfment or growth factor receptor recycling, both of which can modulate cell survival. The polypeptide is Modulator of macroautophagy TMEM150B (Bos taurus (Bovine)).